The chain runs to 229 residues: Large ribosomal subunit protein uL1 (229 aa).

Belongs to the universal ribosomal protein uL1 family. In terms of assembly, part of the 50S ribosomal subunit.

Functionally, binds directly to 23S rRNA. The L1 stalk is quite mobile in the ribosome, and is involved in E site tRNA release. Its function is as follows. Protein L1 is also a translational repressor protein, it controls the translation of the L11 operon by binding to its mRNA. The polypeptide is Large ribosomal subunit protein uL1 (Actinobacillus succinogenes (strain ATCC 55618 / DSM 22257 / CCUG 43843 / 130Z)).